Here is an 86-residue protein sequence, read N- to C-terminus: Large ribosomal subunit protein bL31B (86 aa).

Belongs to the bacterial ribosomal protein bL31 family. Type B subfamily. As to quaternary structure, part of the 50S ribosomal subunit.

This Erwinia tasmaniensis (strain DSM 17950 / CFBP 7177 / CIP 109463 / NCPPB 4357 / Et1/99) protein is Large ribosomal subunit protein bL31B.